The sequence spans 417 residues: Inner membrane transport protein YnfM (417 aa).

Residues 1 to 22 (MSRTTTVDGAPASDTDKQSISQ) are disordered. Topologically, residues 1–38 (MSRTTTVDGAPASDTDKQSISQPNQFIKRGTPQFMRVT) are periplasmic. Residues 39–59 (LALFSAGLATFALLYCVQPIL) form a helical membrane-spanning segment. At 60–73 (PVLSQEFGLTPANS) the chain is on the cytoplasmic side. The helical transmembrane segment at 74 to 94 (SISLSISTAMLAIGLLFTGPL) threads the bilayer. Over 95–101 (SDAIGRK) the chain is Periplasmic. The chain crosses the membrane as a helical span at residues 102-122 (PVMVTALLLASICTLLSTMMT). Topologically, residues 123 to 125 (SWH) are cytoplasmic. Residues 126–146 (GILIMRALIGLSLSGVAAVGM) form a helical membrane-spanning segment. The Periplasmic segment spans residues 147–152 (TYLSEE). The helical transmembrane segment at 153 to 173 (IHPSFVAFSMGLYISGNSIGG) threads the bilayer. The Cytoplasmic portion of the chain corresponds to 174–190 (MSGRLISGVFTDFFNWR). A helical membrane pass occupies residues 191-211 (IALAAIGCFALASALMFWKIL). Residues 212–241 (PESRHFRPTSLRPKTLFINFRLHWRDRGLP) lie on the Periplasmic side of the membrane. Residues 242 to 262 (LLFAEGFLLMGSFVTLFNYIG) form a helical membrane-spanning segment. The Cytoplasmic segment spans residues 263 to 264 (YR). The helical transmembrane segment at 265-285 (LMLSPWHVSQAVVGLLSLAYL) threads the bilayer. Topologically, residues 286–315 (TGTWSSPKAGTMTTRYGRGPVMLFSTGVML) are periplasmic. Residues 316–336 (FGLLMTLFSSLWLIFAGMLLF) traverse the membrane as a helical segment. Residues 337 to 364 (SAGFFAAHSVASSWIGPRAKRAKGQASS) are Cytoplasmic-facing. Residues 365–385 (LYLFSYYLGSSIAGTLGGVFW) form a helical membrane-spanning segment. Residues 386 to 387 (HN) are Periplasmic-facing. A helical transmembrane segment spans residues 388–408 (YGWNGVGAFIALMLVIALLVG). Over 409 to 417 (TRLHRRLHA) the chain is Cytoplasmic.

This sequence belongs to the major facilitator superfamily.

The protein localises to the cell inner membrane. The sequence is that of Inner membrane transport protein YnfM (ynfM) from Escherichia coli (strain K12).